The sequence spans 292 residues: 11-beta-hydroxysteroid dehydrogenase 1 (292 aa).

Residues M1–Y7 lie on the Cytoplasmic side of the membrane. A helical; Signal-anchor for type II membrane protein membrane pass occupies residues L8 to N24. Topologically, residues E25–N292 are lumenal. NADP(+)-binding positions include G41 to S67 and T92 to M93. An N-linked (GlcNAc...) asparagine glycan is attached at N95. NADP(+) is bound at residue N119 to I121. S170 provides a ligand contact to substrate. Y183 functions as the Proton acceptor in the catalytic mechanism. Residue Y183 to K187 participates in NADP(+) binding. N207 carries an N-linked (GlcNAc...) asparagine glycan. NADP(+) is bound by residues G216–T222 and I218–T222.

The protein belongs to the short-chain dehydrogenases/reductases (SDR) family. In terms of assembly, homodimer. Liver, kidney, lung, hypothalamus, anterior pituitary and placenta.

The protein localises to the endoplasmic reticulum membrane. It carries out the reaction an 11beta-hydroxysteroid + NADP(+) = an 11-oxosteroid + NADPH + H(+). It catalyses the reaction corticosterone + NADP(+) = 11-dehydrocorticosterone + NADPH + H(+). The catalysed reaction is cortisone + NADPH + H(+) = cortisol + NADP(+). The enzyme catalyses a 7beta-hydroxysteroid + NADP(+) = a 7-oxosteroid + NADPH + H(+). It carries out the reaction 7-oxocholesterol + NADPH + H(+) = 7beta-hydroxycholesterol + NADP(+). It catalyses the reaction chenodeoxycholate + NADP(+) = 7-oxolithocholate + NADPH + H(+). The catalysed reaction is 7-oxolithocholate + NADPH + H(+) = ursodeoxycholate + NADP(+). The enzyme catalyses glycochenodeoxycholate + NADP(+) = 7-oxoglycolithocholate + NADPH + H(+). It carries out the reaction taurochenodeoxycholate + NADP(+) = 7-oxotaurolithocholate + NADPH + H(+). It catalyses the reaction tauroursodeoxycholate + NADP(+) = 7-oxotaurolithocholate + NADPH + H(+). The catalysed reaction is glycoursodeoxycholate + NADP(+) = 7-oxoglycolithocholate + NADPH + H(+). The enzyme catalyses 7-oxopregnenolone + NADPH + H(+) = 7beta-hydroxypregnenolone + NADP(+). It carries out the reaction 3beta,7alpha-dihydroxyandrost-5-en-17-one + NADP(+) = 3beta-hydroxy-5-androstene-7,17-dione + NADPH + H(+). It catalyses the reaction 3beta-hydroxy-5-androstene-7,17-dione + NADPH + H(+) = 3beta,7beta-dihydroxyandrost-5-en-17-one + NADP(+). The catalysed reaction is 3beta-hydroxy-5alpha-androstane-7,17-dione + NADPH + H(+) = 3beta,7beta-dihydroxy-5alpha-androstan-17-one + NADP(+). Its function is as follows. Controls the reversible conversion of biologically active glucocorticoids such as cortisone to cortisol, and 11-dehydrocorticosterone to corticosterone in the presence of NADP(H). Participates in the corticosteroid receptor-mediated anti-inflammatory response, as well as metabolic and homeostatic processes. Plays a role in the secretion of aqueous humor in the eye, maintaining a normotensive, intraocular environment. Bidirectional in vitro, predominantly functions as a reductase in vivo, thereby increasing the concentration of active glucocorticoids. It has broad substrate specificity, besides glucocorticoids, it accepts other steroid and sterol substrates. Interconverts 7-oxo- and 7-hydroxy-neurosteroids such as 7-oxopregnenolone and 7beta-hydroxypregnenolone, 7-oxodehydroepiandrosterone (3beta-hydroxy-5-androstene-7,17-dione) and 7beta-hydroxydehydroepiandrosterone (3beta,7beta-dihydroxyandrost-5-en-17-one), among others. Catalyzes the stereo-specific conversion of the major dietary oxysterol, 7-ketocholesterol (7-oxocholesterol), into the more polar 7-beta-hydroxycholesterol metabolite. 7-oxocholesterol is one of the most important oxysterols, it participates in several events such as induction of apoptosis, accumulation in atherosclerotic lesions, lipid peroxidation, and induction of foam cell formation. Mediates the 7-oxo reduction of 7-oxolithocholate mainly to chenodeoxycholate, and to a lesser extent to ursodeoxycholate, both in its free form and when conjugated to glycine or taurine, providing a link between glucocorticoid activation and bile acid metabolism. Catalyzes the synthesis of 7-beta-25-dihydroxycholesterol from 7-oxo-25-hydroxycholesterol in vitro, which acts as a ligand for the G-protein-coupled receptor (GPCR) Epstein-Barr virus-induced gene 2 (EBI2) and may thereby regulate immune cell migration. The chain is 11-beta-hydroxysteroid dehydrogenase 1 (HSD11B1) from Ovis aries (Sheep).